A 488-amino-acid chain; its full sequence is 3-octaprenyl-4-hydroxybenzoate carboxy-lyase (488 aa).

N172 is a Mn(2+) binding site. Prenylated FMN contacts are provided by residues 175 to 177, 189 to 191, and 194 to 195; these read IYR, RWL, and RG. E238 serves as a coordination point for Mn(2+). The Proton donor role is filled by D287.

Belongs to the UbiD family. In terms of assembly, homohexamer. Prenylated FMN serves as cofactor. It depends on Mn(2+) as a cofactor.

The protein resides in the cell membrane. It catalyses the reaction a 4-hydroxy-3-(all-trans-polyprenyl)benzoate + H(+) = a 2-(all-trans-polyprenyl)phenol + CO2. It functions in the pathway cofactor biosynthesis; ubiquinone biosynthesis. Catalyzes the decarboxylation of 3-octaprenyl-4-hydroxy benzoate to 2-octaprenylphenol, an intermediate step in ubiquinone biosynthesis. The sequence is that of 3-octaprenyl-4-hydroxybenzoate carboxy-lyase from Azotobacter vinelandii (strain DJ / ATCC BAA-1303).